Here is a 287-residue protein sequence, read N- to C-terminus: Pyridoxal kinase PdxY (287 aa).

Substrate contacts are provided by residues Ser9 and 44–45; that span reads TQ. Residues Asp111, Ala143, Glu148, Lys181, and 208-211 contribute to the ATP site; that span reads RPLV. Asp223 contributes to the substrate binding site.

The protein belongs to the pyridoxine kinase family. PdxY subfamily. As to quaternary structure, homodimer. It depends on Mg(2+) as a cofactor.

The catalysed reaction is pyridoxal + ATP = pyridoxal 5'-phosphate + ADP + H(+). It functions in the pathway cofactor metabolism; pyridoxal 5'-phosphate salvage; pyridoxal 5'-phosphate from pyridoxal: step 1/1. Its function is as follows. Pyridoxal kinase involved in the salvage pathway of pyridoxal 5'-phosphate (PLP). Catalyzes the phosphorylation of pyridoxal to PLP. This is Pyridoxal kinase PdxY from Photorhabdus laumondii subsp. laumondii (strain DSM 15139 / CIP 105565 / TT01) (Photorhabdus luminescens subsp. laumondii).